A 443-amino-acid chain; its full sequence is MSEMTPREIVSELDQHIIGQADAKRAVAIALRNRWRRMQLQEPLRHEVTPKNILMIGPTGVGKTEIARRLAKLANAPFIKVEATKFTEVGYVGKEVDSIIRDLTDSAMKLVRQTEIEKNRFRAEEAAEDRILDALLPPAKNQWGQVETTDSNNTTRQVFRKKLREGQLDDKEIDIDVAAPSMGVEIMAPPGMEEMTNQLQSMFQNLSSGQTKKRKMKIKDALKTLIDDEAAKLINPEDLKQKAIDAVEQNGIVFIDEIDKICKKGEYSGADVSREGVQRDLLPLVEGTTVSTKHGMVKTDHILFIASGAFQVARPSDLIPELQGRLPIRVELSALSAVDFERILTEPNASLTEQYKALMATEGVNIEFTGESIKKIAEAAFRVNEKTENIGARRLHTVMERLMDKISFNASDMQGQVVRIDEAYVMDALGDVVENEDLSRFIL.

ATP is bound by residues Ile-18, 60–65 (GVGKTE), Asp-256, Glu-321, and Arg-393.

Belongs to the ClpX chaperone family. HslU subfamily. As to quaternary structure, a double ring-shaped homohexamer of HslV is capped on each side by a ring-shaped HslU homohexamer. The assembly of the HslU/HslV complex is dependent on binding of ATP.

The protein resides in the cytoplasm. ATPase subunit of a proteasome-like degradation complex; this subunit has chaperone activity. The binding of ATP and its subsequent hydrolysis by HslU are essential for unfolding of protein substrates subsequently hydrolyzed by HslV. HslU recognizes the N-terminal part of its protein substrates and unfolds these before they are guided to HslV for hydrolysis. The chain is ATP-dependent protease ATPase subunit HslU from Pasteurella multocida (strain Pm70).